Reading from the N-terminus, the 147-residue chain is MRTTYMAKPGQVDRKWYVVDAKGISLGRLASTVASILRGKNKPTFTPHVDTGDYVIVINAAEVKLTGKKATGKIYYRHSNHPGGLKQRTAGDFLAKDPEKMVEQTIKGMLPHTSLGRKMGMKLHVYAGESHNQAAQKPEVLDITNLI.

This sequence belongs to the universal ribosomal protein uL13 family. As to quaternary structure, part of the 50S ribosomal subunit.

Its function is as follows. This protein is one of the early assembly proteins of the 50S ribosomal subunit, although it is not seen to bind rRNA by itself. It is important during the early stages of 50S assembly. This is Large ribosomal subunit protein uL13 from Limosilactobacillus fermentum (strain NBRC 3956 / LMG 18251) (Lactobacillus fermentum).